Reading from the N-terminus, the 394-residue chain is Actin-related protein 2-B (394 aa).

ATP contacts are provided by residues 160-162 (GDG), 214-218 (RMMKE), and 305-310 (GGSTMY).

Belongs to the actin family. ARP2 subfamily. As to quaternary structure, component of the Arp2/3 complex composed of actr2/arp2, actr3/arp3, arpc1b, arpc2, arpc3, arpc4 and arpc5.

The protein resides in the cytoplasm. It is found in the cytoskeleton. Its subcellular location is the cell projection. It localises to the nucleus. Its function is as follows. ATP-binding component of the Arp2/3 complex, a multiprotein complex that mediates actin polymerization upon stimulation by nucleation-promoting factor (NPF). The Arp2/3 complex mediates the formation of branched actin networks in the cytoplasm, providing the force for cell motility. Seems to contact the pointed end of the daughter actin filament. In addition to its role in the cytoplasmic cytoskeleton, the Arp2/3 complex also promotes actin polymerization in the nucleus, thereby regulating gene transcription and repair of damaged DNA. The Arp2/3 complex promotes homologous recombination (HR) repair in response to DNA damage by promoting nuclear actin polymerization, leading to drive motility of double-strand breaks (DSBs). The sequence is that of Actin-related protein 2-B (actr2b) from Danio rerio (Zebrafish).